Here is a 108-residue protein sequence, read N- to C-terminus: UPF0145 protein ACIAD2946 (108 aa).

Belongs to the UPF0145 family.

This chain is UPF0145 protein ACIAD2946, found in Acinetobacter baylyi (strain ATCC 33305 / BD413 / ADP1).